Here is a 542-residue protein sequence, read N- to C-terminus: Protein NODULATION SIGNALING PATHWAY 1 (542 aa).

Positions 73–150 are disordered; sequence TSTTSLEPCG…SNCNSGNSKE (78 aa). Residues 92–103 are compositionally biased toward basic and acidic residues; that stretch reads LPKKRNATDESS. A compositionally biased stretch (low complexity) spans 136–148; sequence AKANGSNCNSGNS. Residues 145-532 form the GRAS domain; sequence SGNSKEGRWA…QPVSFCSLWK (388 aa). Residues 152–214 are leucine repeat I (LRI); sequence RWAEQLLNPC…HLSSSSSSPT (63 aa). The segment at 233–332 is VHIID; the sequence is LLKFYEVSPW…GYNYYPRLLG (100 aa). Residues 269 to 273 carry the VHIID motif; that stretch reads LHILD. The segment at 333–357 is leucine repeat II (LRII); that stretch reads YAQSININLQINRIENHSLQTLNAQ. Positions 367-452 are PFYRE; that stretch reads LIVCAQFRLH…RESDERRVME (86 aa). Positions 455–532 are SAW; it reads AAKALTNQRE…QPVSFCSLWK (78 aa).

It belongs to the GRAS family. As to expression, highly expressed in roots.

It is found in the nucleus. Functionally, transcriptional regulator essential for Nod-factor-induced gene expression. Acts downstream of calcium spiking and a calcium/calmodulin-dependent protein kinase required for activation of early nodulation gene expression. Acts as a common symbiosis gene that positively contributes to the early steps of the arbuscular mycorrhizal fungus and rhizobial infection processes in roots. Transcription factor involved in the positive regulation of the beta-carotene isomerase D27, which participates in a pathway leading to biosynthesis of strigolactones in roots. The protein is Protein NODULATION SIGNALING PATHWAY 1 of Lotus japonicus (Lotus corniculatus var. japonicus).